Here is a 176-residue protein sequence, read N- to C-terminus: Large ribosomal subunit protein uL6 (176 aa).

It belongs to the universal ribosomal protein uL6 family. Part of the 50S ribosomal subunit.

Its function is as follows. This protein binds to the 23S rRNA, and is important in its secondary structure. It is located near the subunit interface in the base of the L7/L12 stalk, and near the tRNA binding site of the peptidyltransferase center. The sequence is that of Large ribosomal subunit protein uL6 from Burkholderia ambifaria (strain ATCC BAA-244 / DSM 16087 / CCUG 44356 / LMG 19182 / AMMD) (Burkholderia cepacia (strain AMMD)).